Reading from the N-terminus, the 560-residue chain is Mannosyl-oligosaccharide 1,2-alpha-mannosidase MNS1 (560 aa).

Over 1 to 27 the chain is Cytoplasmic; that stretch reads MARSRSISGYGIWKYLNPAYYLRRPRR. Residues 28 to 47 form a helical; Signal-anchor for type II membrane protein membrane-spanning segment; that stretch reads LALLFIVFVSVSMLVWDRIN. Residues 47–80 are a coiled coil; that stretch reads NLAREHEVEVFKLNEEVSRLEQMLEELNGGVGNK. Residues 48 to 560 lie on the Lumenal side of the membrane; sequence LAREHEVEVF…QRKFGHQINV (513 aa). The active-site Proton donor is the glutamate 179. The active site involves aspartate 312. Residue asparagine 326 is glycosylated (N-linked (GlcNAc...) asparagine). Cysteine 377 and cysteine 409 are joined by a disulfide. Glutamate 423 serves as the catalytic Proton donor. Residue glutamate 445 is part of the active site. Residue asparagine 459 is glycosylated (N-linked (GlcNAc...) asparagine). Threonine 529 provides a ligand contact to Ca(2+).

Belongs to the glycosyl hydrolase 47 family. Ca(2+) is required as a cofactor. Requires Mn(2+) as cofactor. It depends on Mg(2+) as a cofactor. In terms of tissue distribution, expressed in flowers, siliques, stems, leaves, roots, pollen grains, shoot apical meristems, hypocotyls and upper region of the root.

Its subcellular location is the golgi apparatus membrane. It carries out the reaction N(4)-(alpha-D-Man-(1-&gt;2)-alpha-D-Man-(1-&gt;2)-alpha-D-Man-(1-&gt;3)-[alpha-D-Man-(1-&gt;2)-alpha-D-Man-(1-&gt;3)-[alpha-D-Man-(1-&gt;2)-alpha-D-Man-(1-&gt;6)]-alpha-D-Man-(1-&gt;6)]-beta-D-Man-(1-&gt;4)-beta-D-GlcNAc-(1-&gt;4)-beta-D-GlcNAc)-L-asparaginyl-[protein] (N-glucan mannose isomer 9A1,2,3B1,2,3) + 4 H2O = N(4)-(alpha-D-Man-(1-&gt;3)-[alpha-D-Man-(1-&gt;3)-[alpha-D-Man-(1-&gt;6)]-alpha-D-Man-(1-&gt;6)]-beta-D-Man-(1-&gt;4)-beta-D-GlcNAc-(1-&gt;4)-beta-D-GlcNAc)-L-asparaginyl-[protein] (N-glucan mannose isomer 5A1,2) + 4 beta-D-mannose. The enzyme catalyses N(4)-(alpha-D-Man-(1-&gt;2)-alpha-D-Man-(1-&gt;2)-alpha-D-Man-(1-&gt;3)-[alpha-D-Man-(1-&gt;3)-[alpha-D-Man-(1-&gt;2)-alpha-D-Man-(1-&gt;6)]-alpha-D-Man-(1-&gt;6)]-beta-D-Man-(1-&gt;4)-beta-D-GlcNAc-(1-&gt;4)-beta-D-GlcNAc)-L-asparaginyl-[protein] (N-glucan mannose isomer 8A1,2,3B1,3) + 3 H2O = N(4)-(alpha-D-Man-(1-&gt;3)-[alpha-D-Man-(1-&gt;3)-[alpha-D-Man-(1-&gt;6)]-alpha-D-Man-(1-&gt;6)]-beta-D-Man-(1-&gt;4)-beta-D-GlcNAc-(1-&gt;4)-beta-D-GlcNAc)-L-asparaginyl-[protein] (N-glucan mannose isomer 5A1,2) + 3 beta-D-mannose. It catalyses the reaction N(4)-(alpha-D-Man-(1-&gt;2)-alpha-D-Man-(1-&gt;2)-alpha-D-Man-(1-&gt;3)-[alpha-D-Man-(1-&gt;2)-alpha-D-Man-(1-&gt;3)-[alpha-D-Man-(1-&gt;2)-alpha-D-Man-(1-&gt;6)]-alpha-D-Man-(1-&gt;6)]-beta-D-Man-(1-&gt;4)-beta-D-GlcNAc-(1-&gt;4)-beta-D-GlcNAc)-L-asparaginyl-[protein] (N-glucan mannose isomer 9A1,2,3B1,2,3) + H2O = N(4)-(alpha-D-Man-(1-&gt;2)-alpha-D-Man-(1-&gt;2)-alpha-D-Man-(1-&gt;3)-[alpha-D-Man-(1-&gt;3)-[alpha-D-Man-(1-&gt;2)-alpha-D-Man-(1-&gt;6)]-alpha-D-Man-(1-&gt;6)]-beta-D-Man-(1-&gt;4)-beta-D-GlcNAc-(1-&gt;4)-beta-D-GlcNAc)-L-asparaginyl-[protein] (N-glucan mannose isomer 8A1,2,3B1,3) + beta-D-mannose. It functions in the pathway protein modification; protein glycosylation. With respect to regulation, inhibited by kifunensine and 1-deoxymannojirimycin, but not by swainsonine. In terms of biological role, class I alpha-mannosidase essential for early N-glycan processing. Progressively trims alpha-1,2-linked mannose residues. Produces Man(5)GlcNAc(2) from Man(8)GlcNAc(2), but only Man(6)GlcNAc(2) from Man(9)GlcNAc(2). Has difficulty acting on the terminal mannose of the b-branch. Involved in root development and cell wall biosynthesis. The protein is Mannosyl-oligosaccharide 1,2-alpha-mannosidase MNS1 (MNS1) of Arabidopsis thaliana (Mouse-ear cress).